The sequence spans 572 residues: Glypican-5 (572 aa).

Residues Met1–Ser24 form the signal peptide. Asn120 and Asn237 each carry an N-linked (GlcNAc...) asparagine glycan. O-linked (Xyl...) (glycosaminoglycan) serine glycosylation occurs at Ser486. An N-linked (GlcNAc...) asparagine glycan is attached at Asn493. Residues Ser495, Ser507, and Ser509 are each glycosylated (O-linked (Xyl...) (glycosaminoglycan) serine). Asn527 is a glycosylation site (N-linked (GlcNAc...) asparagine).

The protein belongs to the glypican family.

It localises to the cell membrane. Its subcellular location is the secreted. The protein localises to the extracellular space. Its function is as follows. Cell surface proteoglycan that bears heparan sulfate. This Mus musculus (Mouse) protein is Glypican-5 (Gpc5).